Consider the following 178-residue polypeptide: Crossover junction endodeoxyribonuclease RuvC (178 aa).

Residues Asp-20, Glu-80, and Asp-154 contribute to the active site. 3 residues coordinate Mg(2+): Asp-20, Glu-80, and Asp-154.

The protein belongs to the RuvC family. As to quaternary structure, homodimer which binds Holliday junction (HJ) DNA. The HJ becomes 2-fold symmetrical on binding to RuvC with unstacked arms; it has a different conformation from HJ DNA in complex with RuvA. In the full resolvosome a probable DNA-RuvA(4)-RuvB(12)-RuvC(2) complex forms which resolves the HJ. Mg(2+) serves as cofactor.

Its subcellular location is the cytoplasm. The enzyme catalyses Endonucleolytic cleavage at a junction such as a reciprocal single-stranded crossover between two homologous DNA duplexes (Holliday junction).. The RuvA-RuvB-RuvC complex processes Holliday junction (HJ) DNA during genetic recombination and DNA repair. Endonuclease that resolves HJ intermediates. Cleaves cruciform DNA by making single-stranded nicks across the HJ at symmetrical positions within the homologous arms, yielding a 5'-phosphate and a 3'-hydroxyl group; requires a central core of homology in the junction. The consensus cleavage sequence is 5'-(A/T)TT(C/G)-3'. Cleavage occurs on the 3'-side of the TT dinucleotide at the point of strand exchange. HJ branch migration catalyzed by RuvA-RuvB allows RuvC to scan DNA until it finds its consensus sequence, where it cleaves and resolves the cruciform DNA. The polypeptide is Crossover junction endodeoxyribonuclease RuvC (Rhodopirellula baltica (strain DSM 10527 / NCIMB 13988 / SH1)).